Here is a 252-residue protein sequence, read N- to C-terminus: Methylthioribulose-1-phosphate dehydratase (252 aa).

Cysteine 105 is a binding site for substrate. Residues histidine 123 and histidine 125 each contribute to the Zn(2+) site. The Proton donor/acceptor role is filled by glutamate 151. Zn(2+) is bound at residue histidine 208.

The protein belongs to the aldolase class II family. MtnB subfamily. The cofactor is Zn(2+).

The protein localises to the cytoplasm. It carries out the reaction 5-(methylsulfanyl)-D-ribulose 1-phosphate = 5-methylsulfanyl-2,3-dioxopentyl phosphate + H2O. Its pathway is amino-acid biosynthesis; L-methionine biosynthesis via salvage pathway; L-methionine from S-methyl-5-thio-alpha-D-ribose 1-phosphate: step 2/6. Its function is as follows. Catalyzes the dehydration of methylthioribulose-1-phosphate (MTRu-1-P) into 2,3-diketo-5-methylthiopentyl-1-phosphate (DK-MTP-1-P). This chain is Methylthioribulose-1-phosphate dehydratase, found in Sclerotinia sclerotiorum (strain ATCC 18683 / 1980 / Ss-1) (White mold).